We begin with the raw amino-acid sequence, 393 residues long: S-adenosylmethionine synthase (393 aa).

An ATP-binding site is contributed by His16. Residue Asp18 participates in Mg(2+) binding. Glu44 contributes to the K(+) binding site. L-methionine contacts are provided by Glu57 and Gln100. Residues 100-110 are flexible loop; the sequence is QSPDIVMGVDG. ATP-binding positions include 165–167, 231–232, Asp240, 246–247, and Lys267; these read DAK, RF, and RK. Residue Asp240 participates in L-methionine binding. Lys271 serves as a coordination point for L-methionine.

Belongs to the AdoMet synthase family. In terms of assembly, homotetramer; dimer of dimers. Mg(2+) is required as a cofactor. Requires K(+) as cofactor.

Its subcellular location is the cytoplasm. It carries out the reaction L-methionine + ATP + H2O = S-adenosyl-L-methionine + phosphate + diphosphate. It participates in amino-acid biosynthesis; S-adenosyl-L-methionine biosynthesis; S-adenosyl-L-methionine from L-methionine: step 1/1. Functionally, catalyzes the formation of S-adenosylmethionine (AdoMet) from methionine and ATP. The overall synthetic reaction is composed of two sequential steps, AdoMet formation and the subsequent tripolyphosphate hydrolysis which occurs prior to release of AdoMet from the enzyme. In Coxiella burnetii (strain CbuG_Q212) (Coxiella burnetii (strain Q212)), this protein is S-adenosylmethionine synthase.